An 866-amino-acid polypeptide reads, in one-letter code: DNA mismatch repair protein MutS (866 aa).

Gly-613–Ser-620 is a binding site for ATP.

Belongs to the DNA mismatch repair MutS family.

Its function is as follows. This protein is involved in the repair of mismatches in DNA. It is possible that it carries out the mismatch recognition step. This protein has a weak ATPase activity. The polypeptide is DNA mismatch repair protein MutS (Haemophilus ducreyi (strain 35000HP / ATCC 700724)).